The primary structure comprises 294 residues: Glutamyl-Q tRNA(Asp) synthetase (294 aa).

Residues R8–T12 and E44 each bind L-glutamate. The short motif at P11–S21 is the 'HIGH' region element. 4 residues coordinate Zn(2+): C100, C102, Y114, and C118. 2 residues coordinate L-glutamate: Y171 and R189. The 'KMSKS' region motif lies at K227–S231. K230 is a binding site for ATP.

This sequence belongs to the class-I aminoacyl-tRNA synthetase family. GluQ subfamily. It depends on Zn(2+) as a cofactor.

Its function is as follows. Catalyzes the tRNA-independent activation of glutamate in presence of ATP and the subsequent transfer of glutamate onto a tRNA(Asp). Glutamate is transferred on the 2-amino-5-(4,5-dihydroxy-2-cyclopenten-1-yl) moiety of the queuosine in the wobble position of the QUC anticodon. This is Glutamyl-Q tRNA(Asp) synthetase from Ectopseudomonas mendocina (strain ymp) (Pseudomonas mendocina).